The primary structure comprises 359 residues: Guanine nucleotide-binding protein subunit alpha-11 (359 aa).

2 S-palmitoyl cysteine lipidation sites follow: cysteine 9 and cysteine 10. The region spanning arginine 38–valine 359 is the G-alpha domain. The segment at lysine 41–threonine 54 is G1 motif. GTP contacts are provided by residues glycine 46–serine 53 and leucine 180–arginine 183. Serine 53 provides a ligand contact to Mg(2+). The G2 motif stretch occupies residues aspartate 178–threonine 186. Threonine 186 lines the Mg(2+) pocket. The interval phenylalanine 201–arginine 210 is G3 motif. Residues isoleucine 270 to aspartate 277 are G4 motif. Residues asparagine 274–aspartate 277 and alanine 331 each bind GTP. The G5 motif stretch occupies residues threonine 329–threonine 334.

It belongs to the G-alpha family. G(q) subfamily. G proteins are composed of 3 units; alpha, beta and gamma. The alpha chain contains the guanine nucleotide binding site. Interacts with RGS22. Interacts with NTSR1.

The protein resides in the cell membrane. Its subcellular location is the cytoplasm. It carries out the reaction GTP + H2O = GDP + phosphate + H(+). Its function is as follows. Guanine nucleotide-binding proteins (G proteins) function as transducers downstream of G protein-coupled receptors (GPCRs) in numerous signaling cascades. The alpha chain contains the guanine nucleotide binding site and alternates between an active, GTP-bound state and an inactive, GDP-bound state. Signaling by an activated GPCR promotes GDP release and GTP binding. The alpha subunit has a low GTPase activity that converts bound GTP to GDP, thereby terminating the signal. Both GDP release and GTP hydrolysis are modulated by numerous regulatory proteins. Signaling is mediated via phospholipase C-beta-dependent inositol lipid hydrolysis for signal propagation: activates phospholipase C-beta: following GPCR activation, GNA11 activates PLC-beta (PLCB1, PLCB2, PLCB3 or PLCB4), leading to production of diacylglycerol (DAG) and inositol 1,4,5-trisphosphate (IP3). Transduces FFAR4 signaling in response to long-chain fatty acids (LCFAs). Together with GNAQ, required for heart development. In the respiratory epithelium, transmits OXGR1-dependent signals that lead to downstream intracellular Ca(2+) release and mucocilliary clearance of airborne pathogens. The sequence is that of Guanine nucleotide-binding protein subunit alpha-11 (Gna11) from Mus musculus (Mouse).